Reading from the N-terminus, the 456-residue chain is Adenylosuccinate lyase (456 aa).

Residues 15–16, 90–92, and 122–123 contribute to the N(6)-(1,2-dicarboxyethyl)-AMP site; these read RY, NHD, and TS. Catalysis depends on His171, which acts as the Proton donor/acceptor. Position 247 (Gln247) interacts with N(6)-(1,2-dicarboxyethyl)-AMP. Ser295 functions as the Proton donor/acceptor in the catalytic mechanism. Residues Ser296, 301–303, Asn309, Arg335, and 340–344 contribute to the N(6)-(1,2-dicarboxyethyl)-AMP site; these read KVN and STVLR.

This sequence belongs to the lyase 1 family. Adenylosuccinate lyase subfamily. Homotetramer. Residues from neighboring subunits contribute catalytic and substrate-binding residues to each active site.

It carries out the reaction N(6)-(1,2-dicarboxyethyl)-AMP = fumarate + AMP. The catalysed reaction is (2S)-2-[5-amino-1-(5-phospho-beta-D-ribosyl)imidazole-4-carboxamido]succinate = 5-amino-1-(5-phospho-beta-D-ribosyl)imidazole-4-carboxamide + fumarate. It participates in purine metabolism; AMP biosynthesis via de novo pathway; AMP from IMP: step 2/2. The protein operates within purine metabolism; IMP biosynthesis via de novo pathway; 5-amino-1-(5-phospho-D-ribosyl)imidazole-4-carboxamide from 5-amino-1-(5-phospho-D-ribosyl)imidazole-4-carboxylate: step 2/2. Its function is as follows. Catalyzes two reactions in de novo purine nucleotide biosynthesis. Catalyzes the breakdown of 5-aminoimidazole- (N-succinylocarboxamide) ribotide (SAICAR or 2-[5-amino-1-(5-phospho-beta-D-ribosyl)imidazole-4-carboxamido]succinate) to 5-aminoimidazole-4-carboxamide ribotide (AICAR or 5-amino-1-(5-phospho-beta-D-ribosyl)imidazole-4-carboxamide) and fumarate, and of adenylosuccinate (ADS or N(6)-(1,2-dicarboxyethyl)-AMP) to adenosine monophosphate (AMP) and fumarate. In Buchnera aphidicola subsp. Acyrthosiphon pisum (strain APS) (Acyrthosiphon pisum symbiotic bacterium), this protein is Adenylosuccinate lyase (purB).